The chain runs to 336 residues: MQPAERSRVPRIDPYGFERPEDFDDAAYEKFFSSYLVTLTRRAIKWSRLLQGGGVPRSRTVKRYVRKGVPLEHRARVWMVLSGAQAQMDQNPGYYHQLLQGERNPRLEDAIRTDLNRTFPDNVKFRKTTDPCLQRTLYNVLLAYGHHNQGVGYCQGMNFIAGYLILITNNEEESFWLLDALVGRILPDYYSPAMLGLKTDQEVLGELVRAKLPAVGALMERLGVLWTLLVSRWFICLFVDILPVETVLRIWDCLFNEGSKIIFRVALTLIKQHQELILEATSVPDICDKFKQITKGSFVMECHTFMQKIFSEPGSLSMATVAKLRESCRARLLAQG.

The Rab-GAP TBC domain maps to 68-258; the sequence is GVPLEHRARV…RIWDCLFNEG (191 aa).

Functionally, may act as a GTPase-activating protein for Rab family protein(s). The sequence is that of Growth hormone-regulated TBC protein 1 (GRTP1) from Homo sapiens (Human).